The chain runs to 162 residues: Peptide deformylase-like (162 aa).

The protein belongs to the polypeptide deformylase family.

The sequence is that of Peptide deformylase-like from Staphylococcus epidermidis (strain ATCC 35984 / DSM 28319 / BCRC 17069 / CCUG 31568 / BM 3577 / RP62A).